The following is a 102-amino-acid chain: NADH-quinone oxidoreductase subunit K (102 aa).

3 consecutive transmembrane segments (helical) span residues 5 to 25 (LEHY…GIFL), 31 to 51 (IVIL…LVAF), and 66 to 86 (FVLT…VVFF).

Belongs to the complex I subunit 4L family. As to quaternary structure, NDH-1 is composed of 14 different subunits. Subunits NuoA, H, J, K, L, M, N constitute the membrane sector of the complex.

It localises to the cell inner membrane. The enzyme catalyses a quinone + NADH + 5 H(+)(in) = a quinol + NAD(+) + 4 H(+)(out). Functionally, NDH-1 shuttles electrons from NADH, via FMN and iron-sulfur (Fe-S) centers, to quinones in the respiratory chain. The immediate electron acceptor for the enzyme in this species is believed to be ubiquinone. Couples the redox reaction to proton translocation (for every two electrons transferred, four hydrogen ions are translocated across the cytoplasmic membrane), and thus conserves the redox energy in a proton gradient. The polypeptide is NADH-quinone oxidoreductase subunit K (Parvibaculum lavamentivorans (strain DS-1 / DSM 13023 / NCIMB 13966)).